Here is a 2323-residue protein sequence, read N- to C-terminus: C2 domain-containing protein 3 (2323 aa).

Disordered regions lie at residues 1–27, 193–215, 402–426, 444–509, 537–556, and 698–745; these read MKQR…SPST, RELR…SCRG, WNGL…DLND, SDVG…HTPA, PDSP…PPKP, and KLSS…TKKT. The span at 200–209 shows a compositional bias: polar residues; that stretch reads ESSNTQSMIP. Ser453 carries the phosphoserine modification. The span at 474-483 shows a compositional bias: basic and acidic residues; that stretch reads KVVESKEQKQ. One can recognise a C2 1 domain in the interval 504–663; the sequence is PGHTPAMSLS…IQSELLSFSS (160 aa). Polar residues predominate over residues 698-735; it reads KLSSSTQPAPVSAATSSDTILPETGQDTACTRNPQSSN. Position 713 is a phosphoserine (Ser713). 4 consecutive C2 domains span residues 771-903, 969-1131, 1155-1323, and 1383-1517; these read SCNL…SRLL, QPPV…YRED, SSGF…TGWY, and KEEE…TLTI. Over residues 1550 to 1574 the composition is skewed to basic and acidic residues; the sequence is EPARELDSMDCSSHSESEQHPRKSD. 2 disordered regions span residues 1550-1599 and 1798-1824; these read EPAR…NSAA and LAHT…AARH. Polar residues predominate over residues 1584–1599; the sequence is LQTSPTSTQVHGNSAA. The 129-residue stretch at 1598–1726 folds into the C2 6 domain; that stretch reads AAAQVCPAQE…SGFQFICGWY (129 aa). The residue at position 1871 (Ser1871) is a Phosphoserine. Disordered stretches follow at residues 1891–1918, 1952–2013, 2074–2163, 2182–2231, and 2261–2323; these read FSSQ…GRQD, ALTS…GGML, SEVL…SVGW, SEAF…EVST, and SHSP…TEET. The segment covering 1892–1904 has biased composition (low complexity); sequence SSQSSPAVSQSQE. 2 stretches are compositionally biased toward polar residues: residues 1952 to 1965 and 2074 to 2083; these read ALTS…SRAV and SEVLSPQPTE. Residues 2110-2125 are compositionally biased toward low complexity; it reads AVSPQPAQGSPSQSGV. Polar residues predominate over residues 2147 to 2158; the sequence is PSLTFSEAQEGS. Over residues 2182–2197 the composition is skewed to low complexity; the sequence is SEAFSSEFSDSSESFE. Basic and acidic residues predominate over residues 2207–2216; the sequence is SKREDYKDSP. The span at 2222–2231 shows a compositional bias: polar residues; the sequence is QVPTGSEVST.

Interacts with OFD1; OFD1 may act as a negative regulator of C2CD3. Associates with the BBSome complex. Interacts with IFT88, BBS4 and PCM1.

The protein localises to the cytoplasm. It localises to the cytoskeleton. It is found in the cilium basal body. Its subcellular location is the microtubule organizing center. The protein resides in the centrosome. The protein localises to the centriole. Its function is as follows. Component of the centrioles that acts as a positive regulator of centriole elongation. Promotes assembly of centriolar distal appendage, a structure at the distal end of the mother centriole that acts as an anchor of the cilium, and is required for recruitment of centriolar distal appendages proteins CEP83, SCLT1, CEP89, FBF1 and CEP164. Not required for centriolar satellite integrity or RAB8 activation. Required for primary cilium formation. Required for sonic hedgehog/SHH signaling and for proteolytic processing of GLI3. The sequence is that of C2 domain-containing protein 3 (C2cd3) from Mus musculus (Mouse).